We begin with the raw amino-acid sequence, 467 residues long: MLLLLLLPLLWGRERVEGQKSNRKDYSLTMQSSVTVQEGMCVHVRCSFSYPVDSQTDSDPVHGYWFRAGNDISWKAPVATNNPAWAVQEETRDRFHLLGDPQTKNCTLSIRDARMSDAGRYFFRMEKGNIKWNYKYDQLSVNVTALTHRPNILIPGTLESGCFQNLTCSVPWACEQGTPPMISWMGTSVSPLHPSTTRSSVLTLIPQPQHHGTSLTCQVTLPGAGVTTNRTIQLNVSYPPQNLTVTVFQGEGTASTALGNSSSLSVLEGQSLRLVCAVDSNPPARLSWTWRSLTLYPSQPSNPLVLELQVHLGDEGEFTCRAQNSLGSQHVSLNLSLQQEYTGKMRPVSGVLLGAVGGAGATALVFLSFCVIFIVVRSCRKKSARPAADVGDIGMKDANTIRGSASQGNLTESWADDNPRHHGLAAHSSGEEREIQYAPLSFHKGEPQDLSGQEATNNEYSEIKIPK.

Residues 1–18 (MLLLLLLPLLWGRERVEG) form the signal peptide. Residues 19–353 (QKSNRKDYSL…KMRPVSGVLL (335 aa)) are Extracellular-facing. The Ig-like V-type domain occupies 39-122 (GMCVHVRCSF…ARMSDAGRYF (84 aa)). A disulfide bridge connects residues C46 and C106. N-linked (GlcNAc...) asparagine glycosylation occurs at N105. Residues R124 and 131–135 (KWNYK) each bind N-acetylneuraminate. Residues N142 and N165 are each glycosylated (N-linked (GlcNAc...) asparagine). In terms of domain architecture, Ig-like C2-type 1 spans 150–233 (PNILIPGTLE…AGVTTNRTIQ (84 aa)). A disulfide bridge links C168 with C217. N-linked (GlcNAc...) asparagine glycosylation is found at N229, N235, N242, and N260. The region spanning 240–336 (PQNLTVTVFQ…GSQHVSLNLS (97 aa)) is the Ig-like C2-type 2 domain. A disulfide bond links C276 and C320. N-linked (GlcNAc...) asparagine glycosylation occurs at N334. A helical transmembrane segment spans residues 354–376 (GAVGGAGATALVFLSFCVIFIVV). Over 377 to 467 (RSCRKKSARP…NEYSEIKIPK (91 aa)) the chain is Cytoplasmic. Polar residues predominate over residues 401 to 412 (IRGSASQGNLTE). Residues 401–431 (IRGSASQGNLTESWADDNPRHHGLAAHSSGE) form a disordered region. A Phosphoserine modification is found at S429. The short motif at 435–440 (IQYAPL) is the ITIM motif element. Residues 443–467 (HKGEPQDLSGQEATNNEYSEIKIPK) form a disordered region. Residues 450–460 (LSGQEATNNEY) show a composition bias toward polar residues.

Belongs to the immunoglobulin superfamily. SIGLEC (sialic acid binding Ig-like lectin) family. In terms of assembly, interacts with PTPN6/SHP-1 upon phosphorylation. Post-translationally, tyrosine phosphorylated. As to expression, predominantly expressed by resting and activated natural killer cells and at lower levels by granulocytes and monocytes. High expression found in placenta, liver, lung, spleen, and peripheral blood leukocytes.

The protein localises to the membrane. Putative adhesion molecule that mediates sialic-acid dependent binding to cells. Preferentially binds to alpha-2,3- and alpha-2,6-linked sialic acid. Also binds disialogangliosides (disialogalactosyl globoside, disialyl lactotetraosylceramide and disialyl GalNAc lactotetraoslylceramide). The sialic acid recognition site may be masked by cis interactions with sialic acids on the same cell surface. In the immune response, may act as an inhibitory receptor upon ligand induced tyrosine phosphorylation by recruiting cytoplasmic phosphatase(s) via their SH2 domain(s) that block signal transduction through dephosphorylation of signaling molecules. Mediates inhibition of natural killer cells cytotoxicity. May play a role in hemopoiesis. Inhibits differentiation of CD34+ cell precursors towards myelomonocytic cell lineage and proliferation of leukemic myeloid cells (in vitro). The protein is Sialic acid-binding Ig-like lectin 7 (SIGLEC7) of Homo sapiens (Human).